We begin with the raw amino-acid sequence, 68 residues long: MPKMKTHRGAKKRIKVTGTGKFVIKHSGKSHILTKKDRKRKNHLKKDAVVTETYKRHMQGLLPYGEGR.

The protein belongs to the bacterial ribosomal protein bL35 family.

The polypeptide is Large ribosomal subunit protein bL35 (Fusobacterium nucleatum subsp. nucleatum (strain ATCC 25586 / DSM 15643 / BCRC 10681 / CIP 101130 / JCM 8532 / KCTC 2640 / LMG 13131 / VPI 4355)).